The following is a 528-amino-acid chain: (R)-citramalate synthase (528 aa).

Positions 5–271 constitute a Pyruvate carboxyltransferase domain; sequence VYIYDTTLRD…IPQENLKKLT (267 aa).

Belongs to the alpha-IPM synthase/homocitrate synthase family.

It catalyses the reaction pyruvate + acetyl-CoA + H2O = (3R)-citramalate + CoA + H(+). It functions in the pathway amino-acid biosynthesis; L-isoleucine biosynthesis; 2-oxobutanoate from pyruvate: step 1/3. Functionally, catalyzes the condensation of pyruvate and acetyl-coenzyme A to form (R)-citramalate. The polypeptide is (R)-citramalate synthase (Aquifex aeolicus (strain VF5)).